A 179-amino-acid polypeptide reads, in one-letter code: Large ribosomal subunit protein uL5 (179 aa).

It belongs to the universal ribosomal protein uL5 family. In terms of assembly, part of the 50S ribosomal subunit; part of the 5S rRNA/L5/L18/L25 subcomplex. Contacts the 5S rRNA and the P site tRNA. Forms a bridge to the 30S subunit in the 70S ribosome.

Its function is as follows. This is one of the proteins that bind and probably mediate the attachment of the 5S RNA into the large ribosomal subunit, where it forms part of the central protuberance. In the 70S ribosome it contacts protein S13 of the 30S subunit (bridge B1b), connecting the 2 subunits; this bridge is implicated in subunit movement. Contacts the P site tRNA; the 5S rRNA and some of its associated proteins might help stabilize positioning of ribosome-bound tRNAs. The sequence is that of Large ribosomal subunit protein uL5 from Bordetella petrii (strain ATCC BAA-461 / DSM 12804 / CCUG 43448).